Here is a 172-residue protein sequence, read N- to C-terminus: uncharacterized protein (172 aa).

This is an uncharacterized protein from Microplitis demolitor bracovirus (isolate Webb) (MdBV).